The primary structure comprises 307 residues: Olfactory receptor 8K5 (307 aa).

Topologically, residues 1–25 are extracellular; it reads MGQHNLTVLTEFILMELTRRPELQI. The N-linked (GlcNAc...) asparagine glycan is linked to Asn5. Residues 26–46 form a helical membrane-spanning segment; sequence PLFGVFLVIYLITVVGNLTMI. At 47–54 the chain is on the cytoplasmic side; that stretch reads ILTKLDSH. A helical membrane pass occupies residues 55–75; the sequence is LHTPMYFSIRHLAFVDLGNST. Residues 76–99 lie on the Extracellular side of the membrane; sequence VICPKVLANFVVDRNTISYYACAA. A disulfide bridge links Cys97 with Cys189. The chain crosses the membrane as a helical span at residues 100-120; sequence QLAFFLMFIISEFFILSAMAY. The Cytoplasmic segment spans residues 121–139; that stretch reads DRYVAICNPLLYYVIMSQR. A helical membrane pass occupies residues 140–160; the sequence is LCHVLVGIQYLYSTFQALMFT. Residues 161–197 are Extracellular-facing; that stretch reads IKIFTLTFCGSNVISHFYCDDVPLLPMLCSNAQEIEL. The chain crosses the membrane as a helical span at residues 198-217; it reads LSILFSVFNLISSFLIVLVS. Topologically, residues 218–237 are cytoplasmic; the sequence is YMLILLAICQMHSAEGRKKA. Residues 238–258 traverse the membrane as a helical segment; it reads FSTCGSHLTVVVVFYGSLLFM. Topologically, residues 259 to 271 are extracellular; sequence YMQPNSTHFFDTD. N-linked (GlcNAc...) asparagine glycosylation is present at Asn263. The chain crosses the membrane as a helical span at residues 272-292; the sequence is KMASVFYTLVIPMLNPLIYSL. The Cytoplasmic segment spans residues 293–307; that stretch reads RNEEVKNAFYKLFEN.

It belongs to the G-protein coupled receptor 1 family.

It is found in the cell membrane. In terms of biological role, odorant receptor. This Homo sapiens (Human) protein is Olfactory receptor 8K5 (OR8K5).